Consider the following 829-residue polypeptide: Leucine--tRNA ligase (829 aa).

The short motif at 34-44 (PYPSGNIHMGH) is the 'HIGH' region element. A 'KMSKS' region motif is present at residues 591-595 (KMSKS). Lys594 contacts ATP.

Belongs to the class-I aminoacyl-tRNA synthetase family.

The protein localises to the cytoplasm. It catalyses the reaction tRNA(Leu) + L-leucine + ATP = L-leucyl-tRNA(Leu) + AMP + diphosphate. This Ehrlichia canis (strain Jake) protein is Leucine--tRNA ligase.